A 424-amino-acid polypeptide reads, in one-letter code: D-inositol 3-phosphate glycosyltransferase (424 aa).

Residues His-9, 20-25 (DAGGMN), Lys-78, Tyr-110, Thr-134, and Arg-154 contribute to the 1D-myo-inositol 3-phosphate site. Gly-23 serves as a coordination point for UDP-N-acetyl-alpha-D-glucosamine. The UDP-N-acetyl-alpha-D-glucosamine site is built by Arg-231, Lys-236, and Arg-295. Residues Tyr-304, Gln-305, and Ala-307 each coordinate Mg(2+). Residues Glu-317 and Glu-325 each contribute to the UDP-N-acetyl-alpha-D-glucosamine site. Thr-331 provides a ligand contact to Mg(2+).

The protein belongs to the glycosyltransferase group 1 family. MshA subfamily. Homodimer.

The catalysed reaction is 1D-myo-inositol 3-phosphate + UDP-N-acetyl-alpha-D-glucosamine = 1D-myo-inositol 2-acetamido-2-deoxy-alpha-D-glucopyranoside 3-phosphate + UDP + H(+). Catalyzes the transfer of a N-acetyl-glucosamine moiety to 1D-myo-inositol 3-phosphate to produce 1D-myo-inositol 2-acetamido-2-deoxy-glucopyranoside 3-phosphate in the mycothiol biosynthesis pathway. The polypeptide is D-inositol 3-phosphate glycosyltransferase (Corynebacterium urealyticum (strain ATCC 43042 / DSM 7109)).